The following is an 848-amino-acid chain: Translation initiation factor IF-2 (848 aa).

The disordered stretch occupies residues 106–150 (TEQQTEAENSTNINLSEQTIKNNSHQSSSNTIETTQEKKQNDDLS). The segment covering 112–139 (AENSTNINLSEQTIKNNSHQSSSNTIET) has biased composition (polar residues). One can recognise a tr-type G domain in the interval 347 to 517 (PRAPIITVMG…LLLADMLELK (171 aa)). Positions 356–363 (GHVDHGKT) are G1. GTP is bound at residue 356 to 363 (GHVDHGKT). Positions 381–385 (GITQH) are G2. The interval 403–406 (DTPG) is G3. GTP contacts are provided by residues 403–407 (DTPGH) and 457–460 (NKID). The segment at 457–460 (NKID) is G4. The interval 493–495 (SAL) is G5.

The protein belongs to the TRAFAC class translation factor GTPase superfamily. Classic translation factor GTPase family. IF-2 subfamily.

Its subcellular location is the cytoplasm. In terms of biological role, one of the essential components for the initiation of protein synthesis. Protects formylmethionyl-tRNA from spontaneous hydrolysis and promotes its binding to the 30S ribosomal subunits. Also involved in the hydrolysis of GTP during the formation of the 70S ribosomal complex. The protein is Translation initiation factor IF-2 of Orientia tsutsugamushi (strain Boryong) (Rickettsia tsutsugamushi).